We begin with the raw amino-acid sequence, 1157 residues long: uncharacterized protein (1157 aa).

The signal sequence occupies residues 1 to 18 (MNRNIFITLLISLLALSG). Cys19 carries N-palmitoyl cysteine lipidation. The S-diacylglycerol cysteine moiety is linked to residue Cys19. Transmembrane regions (helical) follow at residues 292-312 (LSVSALLTLYIMFTGFSFLIG), 394-414 (LGFIYIILYLIALYFIFLLIF), 423-443 (ALITIGMIITMAPIFICFMLF), and 458-478 (ISYAIQPIILFVGIAFIGMII). The segment at 1134–1157 (QYQKPVENSGRKLRKLEDHLRNMK) is disordered. Basic and acidic residues predominate over residues 1148-1157 (KLEDHLRNMK).

It belongs to the TrbL/VirB6 family.

It is found in the cell membrane. This is an uncharacterized protein from Rickettsia bellii (strain RML369-C).